The following is a 545-amino-acid chain: G-protein coupled receptor 161 (545 aa).

The Extracellular segment spans residues 1-46 (MDFVQHALLTASRGALTMSLNSSLSYRKELSNLTATEGGEGGAVSE). N-linked (GlcNAc...) asparagine glycosylation is found at Asn21 and Asn32. A helical transmembrane segment spans residues 47–67 (FIAIIIITVLVCLGNLVIVVT). The Cytoplasmic segment spans residues 68–80 (LYKKSYLLTLSNK). A helical membrane pass occupies residues 81 to 101 (FVFSLTLSNFLLSVLVLPFVV). At 102-117 (TSSIRREWIFGVVWCN) the chain is on the extracellular side. A disulfide bridge links Cys116 with Cys194. Residue Asn117 is glycosylated (N-linked (GlcNAc...) asparagine). The chain crosses the membrane as a helical span at residues 118–139 (FSALLYLLISSASMLTLGVIAI). The Cytoplasmic portion of the chain corresponds to 140 to 159 (DRYYAVLYPMVYPMKITGNR). Residues 160–180 (AVMALVYIWLHSLIGCLPPLF) form a helical membrane-spanning segment. Over 181–205 (GWSSVEFDEFKWMCVAAWHQEPGYT) the chain is Extracellular. The helical transmembrane segment at 206–226 (IFWQIWCALFPFLIMLVCYGF) threads the bilayer. At 227–285 (IFRVARVKARKVHCGTVVTVEEDSQRSGRKNSSTSTSSSGSRRNALQGVVYSANQCKAL) the chain is on the cytoplasmic side. Residues 286–306 (ITILVVIGAFMVTWGPYMVVI) form a helical membrane-spanning segment. The Extracellular segment spans residues 307–322 (TSEALWGKNCVSPTLE). Residues 323-343 (TWATWLSFTSAICHPLIYGLW) form a helical membrane-spanning segment. The Cytoplasmic portion of the chain corresponds to 344-545 (NKTVRKELLG…EGNVLAAEQR (202 aa)).

This sequence belongs to the G-protein coupled receptor 1 family.

It is found in the cell projection. The protein localises to the cilium membrane. The protein resides in the cell membrane. Key negative regulator of Shh signaling, which promotes the processing of GLI3 into GLI3R during neural tube development. Recruited by TULP3 and the IFT-A complex to primary cilia and acts as a regulator of the PKA-dependent basal repression machinery in Shh signaling by increasing cAMP levels, leading to promote the PKA-dependent processing of GLI3 into GLI3R and repress the Shh signaling. In presence of SHH, it is removed from primary cilia and is internalized into recycling endosomes, preventing its activity and allowing activation of the Shh signaling. Its ligand is unknown. This is G-protein coupled receptor 161 (Gpr161) from Mus musculus (Mouse).